Consider the following 178-residue polypeptide: Large ribosomal subunit protein eL20 (178 aa).

Belongs to the eukaryotic ribosomal protein eL20 family.

The chain is Large ribosomal subunit protein eL20 (RPL18A) from Oryza sativa subsp. japonica (Rice).